The chain runs to 306 residues: D-alanine--D-alanine ligase (306 aa).

The ATP-grasp domain occupies 101-300 (RIMLAAAGVP…FGELVTWMVE (200 aa)). 128 to 182 (MPTPYVLKPNAGGSSVGVFIVREDQAHPPQELTREDWPHGENLLAEEFIPGLELT) lines the ATP pocket. 3 residues coordinate Mg(2+): Asp-250, Glu-267, and Asn-269.

This sequence belongs to the D-alanine--D-alanine ligase family. The cofactor is Mg(2+). Requires Mn(2+) as cofactor.

The protein resides in the cytoplasm. It carries out the reaction 2 D-alanine + ATP = D-alanyl-D-alanine + ADP + phosphate + H(+). The protein operates within cell wall biogenesis; peptidoglycan biosynthesis. In terms of biological role, cell wall formation. This chain is D-alanine--D-alanine ligase, found in Xanthobacter autotrophicus (strain ATCC BAA-1158 / Py2).